The primary structure comprises 361 residues: Beta-hexosaminidase (361 aa).

Residues Asp-69, Arg-77, Arg-144, and 174-175 (KH) each bind substrate. The active-site Proton donor/acceptor is His-187. Catalysis depends on Asp-258, which acts as the Nucleophile.

Belongs to the glycosyl hydrolase 3 family. NagZ subfamily.

The protein localises to the cytoplasm. It carries out the reaction Hydrolysis of terminal non-reducing N-acetyl-D-hexosamine residues in N-acetyl-beta-D-hexosaminides.. Its pathway is cell wall biogenesis; peptidoglycan recycling. In terms of biological role, plays a role in peptidoglycan recycling by cleaving the terminal beta-1,4-linked N-acetylglucosamine (GlcNAc) from peptide-linked peptidoglycan fragments, giving rise to free GlcNAc, anhydro-N-acetylmuramic acid and anhydro-N-acetylmuramic acid-linked peptides. This chain is Beta-hexosaminidase, found in Neisseria gonorrhoeae (strain ATCC 700825 / FA 1090).